A 117-amino-acid chain; its full sequence is UPF0122 protein Teth39_1278 (117 aa).

The protein belongs to the UPF0122 family.

In terms of biological role, might take part in the signal recognition particle (SRP) pathway. This is inferred from the conservation of its genetic proximity to ftsY/ffh. May be a regulatory protein. The polypeptide is UPF0122 protein Teth39_1278 (Thermoanaerobacter pseudethanolicus (strain ATCC 33223 / 39E) (Clostridium thermohydrosulfuricum)).